The primary structure comprises 351 residues: Alternative oxidase, mitochondrial (351 aa).

Residues 147–167 (LTRFIFLESVAGVPGMVGGML) traverse the membrane as a helical segment. Residues Glu154, Glu193, and His196 each coordinate Fe cation. Residues 212–232 (LMVLGAQGVFFNGFFLSYLMS) traverse the membrane as a helical segment. 4 residues coordinate Fe cation: Glu244, Glu245, Glu299, and His302. The segment at 322 to 351 (AAKYKDPTKAHPNKGIADLKPTGWEREEVI) is disordered.

The protein belongs to the alternative oxidase family. Fe cation is required as a cofactor.

Its subcellular location is the mitochondrion inner membrane. Catalyzes cyanide-resistant oxygen consumption. May increase respiration when the cytochrome respiratory pathway is restricted, or in response to low temperatures. The chain is Alternative oxidase, mitochondrial (aox1) from Aspergillus niger.